The following is a 163-amino-acid chain: Photosystem II extrinsic protein V (163 aa).

A signal peptide spans M1–A26. 2 residues coordinate heme c: H67 and H118.

The protein belongs to the cytochrome c family. PsbV subfamily. As to quaternary structure, PSII is composed of 1 copy each of membrane proteins PsbA, PsbB, PsbC, PsbD, PsbE, PsbF, PsbH, PsbI, PsbJ, PsbK, PsbL, PsbM, PsbT, PsbX, PsbY, PsbZ, Psb30/Ycf12, peripheral proteins PsbO, CyanoQ (PsbQ), PsbU, PsbV and a large number of cofactors. It forms dimeric complexes. Requires heme c as cofactor.

The protein resides in the cellular thylakoid membrane. Functionally, one of the extrinsic, lumenal subunits of photosystem II (PSII). PSII is a light-driven water plastoquinone oxidoreductase, using light energy to abstract electrons from H(2)O, generating a proton gradient subsequently used for ATP formation. The extrinsic proteins stabilize the structure of photosystem II oxygen-evolving complex (OEC), the ion environment of oxygen evolution and protect the OEC against heat-induced inactivation. Low-potential cytochrome c that plays a role in the OEC of PSII. The protein is Photosystem II extrinsic protein V of Thermosynechococcus vestitus (strain NIES-2133 / IAM M-273 / BP-1).